The following is a 660-amino-acid chain: Macrolide export ATP-binding/permease protein MacB (660 aa).

In terms of domain architecture, ABC transporter spans 10 to 248 (LVLENIVRKF…TDSQALYGKQ (239 aa)). 46 to 53 (GASGSGKS) is an ATP binding site. The next 4 membrane-spanning stretches (helical) occupy residues 285–305 (FLTMLGVIIGIGAIIAMVALG), 532–552 (ILTLLVSSIAAISLIVGGIGV), 593–613 (VIGGGLGILFGMSIGGLFLLF), and 625–645 (SIILSLTFSTLIGVCFGFSPA).

It belongs to the ABC transporter superfamily. Macrolide exporter (TC 3.A.1.122) family. Homodimer.

It localises to the cell inner membrane. Its function is as follows. Non-canonical ABC transporter that contains transmembrane domains (TMD), which form a pore in the inner membrane, and an ATP-binding domain (NBD), which is responsible for energy generation. Confers resistance against macrolides. The polypeptide is Macrolide export ATP-binding/permease protein MacB (Bartonella henselae (strain ATCC 49882 / DSM 28221 / CCUG 30454 / Houston 1) (Rochalimaea henselae)).